A 60-amino-acid polypeptide reads, in one-letter code: Myrmicitoxin(1)-Pr4c (60 aa).

A signal peptide spans Met-1–Gly-23. A propeptide spanning residues Glu-24 to Ser-33 is cleaved from the precursor. Gln-59 is modified (glutamine amide).

Belongs to the formicidae venom clade 2 family. In terms of tissue distribution, expressed by the venom gland.

It localises to the secreted. Toxin that causes a rapid and irreversible paralysis when intrathoracically injected into insects (blowflies). Does not cause spontaneous nocifensive behaviors by intraplantar injection in mice. This chain is Myrmicitoxin(1)-Pr4c, found in Pogonomyrmex rugosus (Desert harvester ant).